The sequence spans 602 residues: Proteasome-associated ATPase (602 aa).

Residues 1 to 13 are compositionally biased toward basic and acidic residues; the sequence is MQHDLPGGRHDEA. A disordered region spans residues 1–33; sequence MQHDLPGGRHDEADSSETGGAGTTENPSSEQAR. Residues 23–32 show a composition bias toward polar residues; it reads TTENPSSEQA. Residues 28–103 are a coiled coil; sequence SSEQARQIRF…LREEVDRLAQ (76 aa). 291-296 is an ATP binding site; it reads GCGKTL. Positions 601–602 are docks into pockets in the proteasome alpha-ring; it reads YL.

The protein belongs to the AAA ATPase family. In terms of assembly, homohexamer. Assembles into a hexameric ring structure that caps the 20S proteasome core. Strongly interacts with the prokaryotic ubiquitin-like protein Pup through a hydrophobic interface; the interacting region of ARC lies in its N-terminal coiled-coil domain. There is one Pup binding site per ARC hexamer ring. Upon ATP-binding, the C-terminus of ARC interacts with the alpha-rings of the proteasome core, possibly by binding to the intersubunit pockets.

The protein operates within protein degradation; proteasomal Pup-dependent pathway. Its function is as follows. ATPase which is responsible for recognizing, binding, unfolding and translocation of pupylated proteins into the bacterial 20S proteasome core particle. May be essential for opening the gate of the 20S proteasome via an interaction with its C-terminus, thereby allowing substrate entry and access to the site of proteolysis. Thus, the C-termini of the proteasomal ATPase may function like a 'key in a lock' to induce gate opening and therefore regulate proteolysis. The protein is Proteasome-associated ATPase of Saccharomonospora viridis (strain ATCC 15386 / DSM 43017 / JCM 3036 / CCUG 5913 / NBRC 12207 / NCIMB 9602 / P101) (Thermoactinomyces viridis).